The primary structure comprises 437 residues: Aspartic proteinase CDR1 (437 aa).

An N-terminal signal peptide occupies residues 1-25 (MASLFSSVLLSLCLLSSLFLSNANA). Positions 26 to 73 (KPKLGFTADLIHRDSPKSPFYNPMETSSQRLRNAIHRSVNRVFHFTEK) are cleaved as a propeptide — activation peptide. In terms of domain architecture, Peptidase A1 spans 90–430 (YLMNVSIGTP…DTVSKTVSFK (341 aa)). N-linked (GlcNAc...) asparagine glycosylation occurs at N93. Active-site residues include D108 and D319.

The protein belongs to the peptidase A1 family.

It is found in the secreted. The protein localises to the extracellular space. Its subcellular location is the apoplast. Involved in salicylic acid-dependent inducible resistance responses. May release an endogenous peptide elicitor required for the activation of inducible resistance mechanisms. Possesses protease activity in vitro. This Arabidopsis thaliana (Mouse-ear cress) protein is Aspartic proteinase CDR1 (CDR1).